A 313-amino-acid chain; its full sequence is Ribosomal RNA small subunit methyltransferase H (313 aa).

Residues 35 to 37 (GGH), D55, F81, D103, and Q110 contribute to the S-adenosyl-L-methionine site.

Belongs to the methyltransferase superfamily. RsmH family.

It localises to the cytoplasm. The catalysed reaction is cytidine(1402) in 16S rRNA + S-adenosyl-L-methionine = N(4)-methylcytidine(1402) in 16S rRNA + S-adenosyl-L-homocysteine + H(+). In terms of biological role, specifically methylates the N4 position of cytidine in position 1402 (C1402) of 16S rRNA. The chain is Ribosomal RNA small subunit methyltransferase H from Azotobacter vinelandii (strain DJ / ATCC BAA-1303).